The chain runs to 664 residues: Transketolase 1 (664 aa).

His26 serves as a coordination point for substrate. Thiamine diphosphate contacts are provided by residues His66 and 114 to 116 (GPL). Asp155 lines the Mg(2+) pocket. Thiamine diphosphate contacts are provided by Gly156 and Asn185. The Mg(2+) site is built by Asn185 and Ile187. Positions 260, 357, and 384 each coordinate substrate. His260 is a thiamine diphosphate binding site. Glu411 (proton donor) is an active-site residue. Residue Phe437 coordinates thiamine diphosphate. Residues His461, Asp469, and Arg520 each coordinate substrate.

This sequence belongs to the transketolase family. As to quaternary structure, homodimer. It depends on Mg(2+) as a cofactor. Ca(2+) is required as a cofactor. Mn(2+) serves as cofactor. Requires Co(2+) as cofactor. The cofactor is thiamine diphosphate.

The enzyme catalyses D-sedoheptulose 7-phosphate + D-glyceraldehyde 3-phosphate = aldehydo-D-ribose 5-phosphate + D-xylulose 5-phosphate. Catalyzes the transfer of a two-carbon ketol group from a ketose donor to an aldose acceptor, via a covalent intermediate with the cofactor thiamine pyrophosphate. The polypeptide is Transketolase 1 (tkt1) (Aliivibrio fischeri (strain ATCC 700601 / ES114) (Vibrio fischeri)).